The chain runs to 144 residues: Large-conductance mechanosensitive channel (144 aa).

The next 2 membrane-spanning stretches (helical) occupy residues 21–41 (VGII…ANVI) and 76–96 (GIFL…FCII). The tract at residues 105-144 (QRGGKTRRAVQTECGRDAAYRDPRSLETTKQRHGAGYNDD) is disordered. Basic and acidic residues predominate over residues 118 to 134 (CGRDAAYRDPRSLETTK).

This sequence belongs to the MscL family. Homopentamer.

It localises to the cell inner membrane. Functionally, channel that opens in response to stretch forces in the membrane lipid bilayer. May participate in the regulation of osmotic pressure changes within the cell. In Sodalis glossinidius (strain morsitans), this protein is Large-conductance mechanosensitive channel.